The primary structure comprises 256 residues: Ubiquinone/menaquinone biosynthesis C-methyltransferase UbiE (256 aa).

S-adenosyl-L-methionine-binding positions include threonine 79, aspartate 100, and 128-129 (DA).

The protein belongs to the class I-like SAM-binding methyltransferase superfamily. MenG/UbiE family.

It carries out the reaction a 2-demethylmenaquinol + S-adenosyl-L-methionine = a menaquinol + S-adenosyl-L-homocysteine + H(+). The enzyme catalyses a 2-methoxy-6-(all-trans-polyprenyl)benzene-1,4-diol + S-adenosyl-L-methionine = a 5-methoxy-2-methyl-3-(all-trans-polyprenyl)benzene-1,4-diol + S-adenosyl-L-homocysteine + H(+). The protein operates within quinol/quinone metabolism; menaquinone biosynthesis; menaquinol from 1,4-dihydroxy-2-naphthoate: step 2/2. It functions in the pathway cofactor biosynthesis; ubiquinone biosynthesis. Methyltransferase required for the conversion of demethylmenaquinol (DMKH2) to menaquinol (MKH2) and the conversion of 2-polyprenyl-6-methoxy-1,4-benzoquinol (DDMQH2) to 2-polyprenyl-3-methyl-6-methoxy-1,4-benzoquinol (DMQH2). The protein is Ubiquinone/menaquinone biosynthesis C-methyltransferase UbiE of Pseudomonas fluorescens (strain SBW25).